The sequence spans 426 residues: Putative phosphate permease CPn_0680/CP_0067/CPj0680/CpB0707 (426 aa).

Helical transmembrane passes span 1 to 21 (MLPL…NIGA), 42 to 62 (AVVI…DRVA), 87 to 107 (TAAL…GWPV), 112 to 132 (SIVG…IIYW), 137 to 157 (IILI…YLIF), 180 to 200 (FLAA…GVIL), 207 to 227 (WAVS…FYYV), 260 to 280 (LVVE…MAFA), 313 to 333 (LMAF…WRVI), 364 to 384 (ILGL…GIGL), and 399 to 419 (IVLS…LFFF).

This sequence belongs to the inorganic phosphate transporter (PiT) (TC 2.A.20) family.

It is found in the cell membrane. Its function is as follows. Potential transporter for phosphate. This is Putative phosphate permease CPn_0680/CP_0067/CPj0680/CpB0707 from Chlamydia pneumoniae (Chlamydophila pneumoniae).